Consider the following 77-residue polypeptide: MKLFLAIVLILMLQFLSTGAETSDNHASRSTTALRDWLLGPKAKRCAVTHEKCSDDYDCCGSLCCVGICAKTIAPCK.

An N-terminal signal peptide occupies residues 1–20 (MKLFLAIVLILMLQFLSTGA). Positions 21–45 (ETSDNHASRSTTALRDWLLGPKAKR) are excised as a propeptide. Disulfide bonds link cysteine 46–cysteine 60, cysteine 53–cysteine 65, cysteine 59–cysteine 69, and cysteine 64–cysteine 76.

The protein belongs to the conotoxin I3 superfamily. Expressed by the venom duct.

It is found in the secreted. May embed in the membrane and bind to the voltage sensor domain of a ion channel. Does not induce paralysis when injected in fish, leading to the hypothesis that it may be part of the sedative nirvana cabal. The protein is Conotoxin G11.1 of Conus geographus (Geography cone).